The primary structure comprises 403 residues: ESX-5 secretion system protein EccE5 (403 aa).

Transmembrane regions (helical) follow at residues 9–29 (LALS…ILIV) and 43–63 (IAWW…VVTY).

It belongs to the EccE family. Part of the ESX-5 / type VII secretion system (T7SS), which is composed of cytosolic and membrane components. The ESX-5 membrane complex is composed of EccB5, EccC5, EccD5 and EccE5.

It is found in the cell inner membrane. Its function is as follows. Part of the ESX-5 specialized secretion system, which is responsible for the secretion of EsxN and a number of PE_PGRS and PPE proteins. The protein is ESX-5 secretion system protein EccE5 of Mycobacterium marinum (strain ATCC BAA-535 / M).